A 349-amino-acid polypeptide reads, in one-letter code: Isopentenyl-diphosphate delta-isomerase (349 aa).

9–10 (RK) is a substrate binding site. FMN is bound by residues 65–67 (AMT), serine 95, and asparagine 124. 95-97 (STH) serves as a coordination point for substrate. Glutamine 154 serves as a coordination point for substrate. Glutamate 155 is a Mg(2+) binding site. FMN is bound by residues lysine 186, serine 211, threonine 216, 262–264 (GLR), and 283–284 (SR).

The protein belongs to the IPP isomerase type 2 family. Homooctamer. Dimer of tetramers. FMN is required as a cofactor. The cofactor is NADPH. It depends on Mg(2+) as a cofactor.

It localises to the cytoplasm. The enzyme catalyses isopentenyl diphosphate = dimethylallyl diphosphate. In terms of biological role, involved in the biosynthesis of isoprenoids. Catalyzes the 1,3-allylic rearrangement of the homoallylic substrate isopentenyl (IPP) to its allylic isomer, dimethylallyl diphosphate (DMAPP). This is Isopentenyl-diphosphate delta-isomerase from Staphylococcus aureus (strain N315).